Here is a 422-residue protein sequence, read N- to C-terminus: Serine hydroxymethyltransferase (422 aa).

Residues Leu118 and 122–124 (GHL) each bind (6S)-5,6,7,8-tetrahydrofolate. Lys227 is modified (N6-(pyridoxal phosphate)lysine). Residues Glu243 and 351–353 (SPF) contribute to the (6S)-5,6,7,8-tetrahydrofolate site.

The protein belongs to the SHMT family. In terms of assembly, homodimer. Pyridoxal 5'-phosphate serves as cofactor.

The protein localises to the cytoplasm. It carries out the reaction (6R)-5,10-methylene-5,6,7,8-tetrahydrofolate + glycine + H2O = (6S)-5,6,7,8-tetrahydrofolate + L-serine. It functions in the pathway one-carbon metabolism; tetrahydrofolate interconversion. Its pathway is amino-acid biosynthesis; glycine biosynthesis; glycine from L-serine: step 1/1. Its function is as follows. Catalyzes the reversible interconversion of serine and glycine with tetrahydrofolate (THF) serving as the one-carbon carrier. This reaction serves as the major source of one-carbon groups required for the biosynthesis of purines, thymidylate, methionine, and other important biomolecules. Also exhibits THF-independent aldolase activity toward beta-hydroxyamino acids, producing glycine and aldehydes, via a retro-aldol mechanism. In Fervidobacterium nodosum (strain ATCC 35602 / DSM 5306 / Rt17-B1), this protein is Serine hydroxymethyltransferase.